Consider the following 149-residue polypeptide: Probable ubiquitin-conjugating enzyme E2 W (149 aa).

The 146-residue stretch at 4 to 149 (RYAKRLQKEL…VRWMFHDDTV (146 aa)) folds into the UBC core domain. Catalysis depends on cysteine 88, which acts as the Glycyl thioester intermediate.

It belongs to the ubiquitin-conjugating enzyme family.

It catalyses the reaction S-ubiquitinyl-[E1 ubiquitin-activating enzyme]-L-cysteine + [E2 ubiquitin-conjugating enzyme]-L-cysteine = [E1 ubiquitin-activating enzyme]-L-cysteine + S-ubiquitinyl-[E2 ubiquitin-conjugating enzyme]-L-cysteine.. It carries out the reaction S-ubiquitinyl-[E1 ubiquitin-activating enzyme]-L-cysteine + [acceptor protein]-N-terminal-amino acid = [E1 ubiquitin-activating enzyme]-L-cysteine + N-terminal-ubiquitinyl-[acceptor protein].. Its pathway is protein modification; protein ubiquitination. Its function is as follows. Catalyzes the covalent attachment of ubiquitin to other proteins. The chain is Probable ubiquitin-conjugating enzyme E2 W (ube2w) from Dictyostelium discoideum (Social amoeba).